The primary structure comprises 148 residues: 3-dehydroquinate dehydratase (148 aa).

Tyrosine 23 (proton acceptor) is an active-site residue. Substrate is bound by residues asparagine 75, histidine 81, and aspartate 88. The Proton donor role is filled by histidine 101. Residues 102–103 (LS) and arginine 112 each bind substrate.

Belongs to the type-II 3-dehydroquinase family. As to quaternary structure, homododecamer.

The enzyme catalyses 3-dehydroquinate = 3-dehydroshikimate + H2O. It functions in the pathway metabolic intermediate biosynthesis; chorismate biosynthesis; chorismate from D-erythrose 4-phosphate and phosphoenolpyruvate: step 3/7. Functionally, catalyzes a trans-dehydration via an enolate intermediate. This Xanthomonas campestris pv. campestris (strain 8004) protein is 3-dehydroquinate dehydratase.